The primary structure comprises 433 residues: Serine hydroxymethyltransferase (433 aa).

121–123 (AHV) serves as a coordination point for (6S)-5,6,7,8-tetrahydrofolate. An N6-(pyridoxal phosphate)lysine modification is found at K227. E243 contacts (6S)-5,6,7,8-tetrahydrofolate.

This sequence belongs to the SHMT family. As to quaternary structure, homodimer. Pyridoxal 5'-phosphate is required as a cofactor.

The protein resides in the cytoplasm. It catalyses the reaction 5,10-methylenetetrahydrosulfopterin + glycine + H2O = tetrahydrosulfopterin + L-serine. The protein operates within amino-acid biosynthesis; glycine biosynthesis; glycine from L-serine: step 1/1. With respect to regulation, is completely inhibited by addition of NaCNBH(3) in vitro; this reagent is a known inhibitor of PLP enzymes, that reduces the internal aldimine of PLP to the catalytically inactive and stable secondary amine. Is also inhibited by L-cysteine, which forms a thiazolidine complex with the active site PLP. Catalyzes the reversible interconversion of serine and glycine with the modified folate sulfopterin serving as the one-carbon carrier. Cannot use tetrahydrofolate (THF or H4PteGlu) as the pteridine substrate. Also exhibits a pteridine-independent aldolase activity toward beta-hydroxyamino acids, producing glycine and aldehydes, via a retro-aldol mechanism. Thus, is able to catalyze the cleavage of both allo-threonine and beta-phenylserine. The chain is Serine hydroxymethyltransferase from Saccharolobus solfataricus (strain ATCC 35092 / DSM 1617 / JCM 11322 / P2) (Sulfolobus solfataricus).